The primary structure comprises 531 residues: Probable rhamnogalacturonate lyase A (531 aa).

The N-terminal stretch at 1-20 (MLSKALFFSSLPLWAKVASA) is a signal peptide. Intrachain disulfides connect cysteine 50–cysteine 93 and cysteine 184–cysteine 193. Asparagine 351 is a glycosylation site (N-linked (GlcNAc...) asparagine).

Belongs to the polysaccharide lyase 4 family.

The protein localises to the secreted. The catalysed reaction is Endotype eliminative cleavage of L-alpha-rhamnopyranosyl-(1-&gt;4)-alpha-D-galactopyranosyluronic acid bonds of rhamnogalacturonan I domains in ramified hairy regions of pectin leaving L-rhamnopyranose at the reducing end and 4-deoxy-4,5-unsaturated D-galactopyranosyluronic acid at the non-reducing end.. In terms of biological role, pectinolytic enzymes consist of four classes of enzymes: pectin lyase, polygalacturonase, pectin methylesterase and rhamnogalacturonase. Degrades the rhamnogalacturonan I (RG-I) backbone of pectin. The chain is Probable rhamnogalacturonate lyase A (rglA) from Aspergillus terreus (strain NIH 2624 / FGSC A1156).